A 592-amino-acid chain; its full sequence is A-type ATP synthase subunit A (592 aa).

233-240 (GPFGSGKT) is an ATP binding site.

This sequence belongs to the ATPase alpha/beta chains family. As to quaternary structure, has multiple subunits with at least A(3), B(3), C, D, E, F, H, I and proteolipid K(x).

It is found in the cell membrane. The enzyme catalyses ATP + H2O + 4 H(+)(in) = ADP + phosphate + 5 H(+)(out). Component of the A-type ATP synthase that produces ATP from ADP in the presence of a proton gradient across the membrane. The A chain is the catalytic subunit. This is A-type ATP synthase subunit A from Saccharolobus islandicus (strain L.S.2.15 / Lassen #1) (Sulfolobus islandicus).